Reading from the N-terminus, the 221-residue chain is Octanoyltransferase (221 aa).

Residues 40–218 (PNLEDVLILL…AFAEVFGLEL (179 aa)) form the BPL/LPL catalytic domain. Substrate-binding positions include 82-89 (RGGEVTYH), 149-151 (AIG), and 162-164 (GFA). Residue cysteine 180 is the Acyl-thioester intermediate of the active site.

It belongs to the LipB family.

The protein resides in the cytoplasm. The enzyme catalyses octanoyl-[ACP] + L-lysyl-[protein] = N(6)-octanoyl-L-lysyl-[protein] + holo-[ACP] + H(+). Its pathway is protein modification; protein lipoylation via endogenous pathway; protein N(6)-(lipoyl)lysine from octanoyl-[acyl-carrier-protein]: step 1/2. Its function is as follows. Catalyzes the transfer of endogenously produced octanoic acid from octanoyl-acyl-carrier-protein onto the lipoyl domains of lipoate-dependent enzymes. Lipoyl-ACP can also act as a substrate although octanoyl-ACP is likely to be the physiological substrate. In Nostoc sp. (strain PCC 7120 / SAG 25.82 / UTEX 2576), this protein is Octanoyltransferase.